The sequence spans 215 residues: Pyridoxine/pyridoxamine 5'-phosphate oxidase (215 aa).

Residues 9–12 (RRDY) and lysine 69 contribute to the substrate site. Residues 64–69 (RILLLK), 79–80 (FT), lysine 86, and glutamine 108 contribute to the FMN site. Substrate is bound by residues tyrosine 126, arginine 130, and serine 134. FMN is bound by residues 143–144 (QS) and tryptophan 188. 194-196 (RLH) contacts substrate. Arginine 198 serves as a coordination point for FMN.

The protein belongs to the pyridoxamine 5'-phosphate oxidase family. Homodimer. FMN serves as cofactor.

It catalyses the reaction pyridoxamine 5'-phosphate + O2 + H2O = pyridoxal 5'-phosphate + H2O2 + NH4(+). The catalysed reaction is pyridoxine 5'-phosphate + O2 = pyridoxal 5'-phosphate + H2O2. It functions in the pathway cofactor metabolism; pyridoxal 5'-phosphate salvage; pyridoxal 5'-phosphate from pyridoxamine 5'-phosphate: step 1/1. It participates in cofactor metabolism; pyridoxal 5'-phosphate salvage; pyridoxal 5'-phosphate from pyridoxine 5'-phosphate: step 1/1. Catalyzes the oxidation of either pyridoxine 5'-phosphate (PNP) or pyridoxamine 5'-phosphate (PMP) into pyridoxal 5'-phosphate (PLP). The protein is Pyridoxine/pyridoxamine 5'-phosphate oxidase of Pseudomonas fluorescens (strain SBW25).